The following is a 162-amino-acid chain: UPF0262 protein Pden_1958 (162 aa).

A disordered region spans residues 1–22; it reads MSQSANRLCRIDIDDSALPPPS.

The protein belongs to the UPF0262 family.

The protein is UPF0262 protein Pden_1958 of Paracoccus denitrificans (strain Pd 1222).